A 280-amino-acid polypeptide reads, in one-letter code: Elongation factor 1-delta (280 aa).

A2 carries the N-acetylalanine modification. K17 carries the post-translational modification N6-acetyllysine. Residues S37, S44, S60, S86, and S106 each carry the phosphoserine modification. K107 bears the N6-acetyllysine mark. The disordered stretch occupies residues 113-171 (SALEKSSPAHRATTPQTQHVSPMRQVEPPSRKAATATEDDEDDDIDLFGSDEEEDKEAT). At K117 the chain carries N6-acetyllysine; alternate. An N6-succinyllysine; alternate modification is found at K117. Position 119 is a phosphoserine (S119). Position 129 is a phosphothreonine (T129). S133 carries the phosphoserine modification. T147 carries the phosphothreonine modification. Acidic residues predominate over residues 149–168 (TEDDEDDDIDLFGSDEEEDK). Residue S162 is modified to Phosphoserine; by CK2.

It belongs to the EF-1-beta/EF-1-delta family. In terms of assembly, EF-1 is composed of 4 subunits: alpha, beta, delta, and gamma.

Its function is as follows. EF-1-beta and EF-1-delta stimulate the exchange of GDP bound to EF-1-alpha to GTP. In Bos taurus (Bovine), this protein is Elongation factor 1-delta (EEF1D).